Consider the following 152-residue polypeptide: Ubiquitin-conjugating enzyme E2 1 (152 aa).

One can recognise a UBC core domain in the interval 4-150; sequence PARKRLMRDF…VRDVVEQSWT (147 aa). Residue Cys-88 is the Glycyl thioester intermediate of the active site. Residues 119 to 152 are disordered; sequence NSPANSEAARMYSESKREYNRRVRDVVEQSWTAD. The segment covering 131–145 has biased composition (basic and acidic residues); it reads SESKREYNRRVRDVV.

Belongs to the ubiquitin-conjugating enzyme family. As to expression, ubiquitously expressed.

The catalysed reaction is S-ubiquitinyl-[E1 ubiquitin-activating enzyme]-L-cysteine + [E2 ubiquitin-conjugating enzyme]-L-cysteine = [E1 ubiquitin-activating enzyme]-L-cysteine + S-ubiquitinyl-[E2 ubiquitin-conjugating enzyme]-L-cysteine.. It functions in the pathway protein modification; protein ubiquitination. Accepts the ubiquitin from the E1 complex and catalyzes its covalent attachment to other proteins. In Arabidopsis thaliana (Mouse-ear cress), this protein is Ubiquitin-conjugating enzyme E2 1 (UBC1).